The following is a 207-amino-acid chain: Probable GTP-binding protein EngB (207 aa).

An EngB-type G domain is found at 23–197 (AGIEVVFAGR…ETVIGRWLFA (175 aa)). Residues 31-38 (GRSNAGKS), 58-62 (GRTQL), 76-79 (DLPG), 143-146 (TKAD), and 176-178 (FSS) each bind GTP. Ser-38 and Thr-60 together coordinate Mg(2+).

This sequence belongs to the TRAFAC class TrmE-Era-EngA-EngB-Septin-like GTPase superfamily. EngB GTPase family. Mg(2+) is required as a cofactor.

Functionally, necessary for normal cell division and for the maintenance of normal septation. In Methylobacillus flagellatus (strain ATCC 51484 / DSM 6875 / VKM B-1610 / KT), this protein is Probable GTP-binding protein EngB.